The sequence spans 499 residues: Pyruvate kinase (499 aa).

Arg50 serves as a coordination point for substrate. 4 residues coordinate K(+): Asn52, Ser54, Asp84, and Thr85. 52 to 55 contacts ATP; the sequence is NFSH. Arg91 contacts ATP. Glu241 is a binding site for Mg(2+). Gly264, Asp265, and Thr297 together coordinate substrate. Asp265 is a Mg(2+) binding site.

Belongs to the pyruvate kinase family. In terms of assembly, homotetramer. Requires Mg(2+) as cofactor. K(+) is required as a cofactor.

The catalysed reaction is pyruvate + ATP = phosphoenolpyruvate + ADP + H(+). The protein operates within carbohydrate degradation; glycolysis; pyruvate from D-glyceraldehyde 3-phosphate: step 5/5. Activated by fructose 2,6-bisphosphate, activated by the effector in a non cooperative manner. The polypeptide is Pyruvate kinase (PYK) (Leishmania mexicana).